Consider the following 651-residue polypeptide: p-hydroxybenzoic acid efflux pump subunit AaeB (651 aa).

The next 11 helical transmembrane spans lie at 11 to 31 (FACK…WFEM), 41 to 61 (AAIV…SGAI), 65 to 85 (GLLR…IIMT), 91 to 111 (VVML…SSLV), 117 to 137 (YVFA…QSSP), 150 to 170 (EIIL…PRSV), 367 to 387 (LFWL…LGVV), 404 to 424 (FLIG…LVLP), 428 to 448 (QSLL…GIEI), 454 to 474 (GSLG…PMTF), and 480 to 500 (LDNA…IMLI).

Belongs to the aromatic acid exporter ArAE (TC 2.A.85) family.

The protein localises to the cell inner membrane. In terms of biological role, forms an efflux pump with AaeA. Could function as a metabolic relief valve, allowing to eliminate certain compounds when they accumulate to high levels in the cell. In Musicola paradisiaca (strain Ech703) (Dickeya paradisiaca), this protein is p-hydroxybenzoic acid efflux pump subunit AaeB.